A 396-amino-acid chain; its full sequence is Elongation factor Tu (396 aa).

One can recognise a tr-type G domain in the interval Lys-10–Val-205. The segment at Gly-19–Thr-26 is G1. Gly-19–Thr-26 contributes to the GTP binding site. Thr-26 is a Mg(2+) binding site. The interval Gly-62–Asn-66 is G2. Positions Asp-83–Gly-86 are G3. Residues Asp-83 to His-87 and Asn-138 to Asp-141 contribute to the GTP site. Residues Asn-138–Asp-141 form a G4 region. A G5 region spans residues Ser-175 to Leu-177.

This sequence belongs to the TRAFAC class translation factor GTPase superfamily. Classic translation factor GTPase family. EF-Tu/EF-1A subfamily. Monomer.

Its subcellular location is the cytoplasm. The catalysed reaction is GTP + H2O = GDP + phosphate + H(+). Functionally, GTP hydrolase that promotes the GTP-dependent binding of aminoacyl-tRNA to the A-site of ribosomes during protein biosynthesis. The polypeptide is Elongation factor Tu (Mycobacterium bovis (strain ATCC BAA-935 / AF2122/97)).